A 1165-amino-acid chain; its full sequence is DNA-directed RNA polymerase subunit beta (1165 aa).

It belongs to the RNA polymerase beta chain family. The RNAP catalytic core consists of 2 alpha, 1 beta, 1 beta' and 1 omega subunit. When a sigma factor is associated with the core the holoenzyme is formed, which can initiate transcription.

It catalyses the reaction RNA(n) + a ribonucleoside 5'-triphosphate = RNA(n+1) + diphosphate. Functionally, DNA-dependent RNA polymerase catalyzes the transcription of DNA into RNA using the four ribonucleoside triphosphates as substrates. The protein is DNA-directed RNA polymerase subunit beta of Corynebacterium glutamicum (strain ATCC 13032 / DSM 20300 / JCM 1318 / BCRC 11384 / CCUG 27702 / LMG 3730 / NBRC 12168 / NCIMB 10025 / NRRL B-2784 / 534).